The primary structure comprises 381 residues: 4-hydroxyphenylpyruvate dioxygenase (381 aa).

VOC domains lie at Gly22–Arg156 and Ala184–Lys338. Residues His187, His270, and Glu349 each contribute to the Fe cation site.

The protein belongs to the 4HPPD family. As to quaternary structure, homodimer. Fe cation serves as cofactor.

The enzyme catalyses 3-(4-hydroxyphenyl)pyruvate + O2 = homogentisate + CO2. Its pathway is amino-acid degradation; L-phenylalanine degradation; acetoacetate and fumarate from L-phenylalanine: step 3/6. The chain is 4-hydroxyphenylpyruvate dioxygenase (hpd) from Streptomyces coelicolor (strain ATCC BAA-471 / A3(2) / M145).